The following is a 473-amino-acid chain: uncharacterized protein (473 aa).

Positions 26–254 (PKLYIASSGV…KMSEIFNSFG (229 aa)) constitute an SET domain.

This is an uncharacterized protein from Schizosaccharomyces pombe (strain 972 / ATCC 24843) (Fission yeast).